The primary structure comprises 1071 residues: Tricorn protease (1071 aa).

Residues 39-310 (MPNLLLNPDI…EKIEKIEIGD (272 aa)) are six-bladed beta propeller. Positions 131–132 (RR) are binds the substrate's C-terminus. The segment at 326–675 (AEDFSPLDGD…EDERTVETDK (350 aa)) is seven-bladed beta propeller. The tract at residues 679–745 (VSSIHEEFLQ…VEMQGEYRTS (67 aa)) is C-1; helical bundle. Histidine 746 (charge relay system) is an active-site residue. The tract at residues 761-855 (RSGRIACDFK…DLMIDILDDD (95 aa)) is PDZ-like. Residues 856 to 1061 (RFIRYRSWVE…IDALIEELRN (206 aa)) are C-2; alpha-beta sandwich. Residue 916 to 918 (GGG) participates in substrate binding. Catalysis depends on serine 965, which acts as the Nucleophile. A substrate-binding site is contributed by 993-995 (GIT). The active-site Charge relay system is glutamate 1023.

It belongs to the peptidase S41B family. Part of the Tricorn proteolytic complex. Assembles to form a hexameric toroid, 20 copies of which may then assemble to form an icosahedral supermolecule of 14.6 MDa.

It localises to the cytoplasm. Its function is as follows. Tricorn degrades oligopeptides (probably derived from the proteasome) and channels the products to F1, F2 and F3 proteases, which then catalyze the terminal degradation step, yielding free amino acids. In Thermoplasma acidophilum (strain ATCC 25905 / DSM 1728 / JCM 9062 / NBRC 15155 / AMRC-C165), this protein is Tricorn protease (tri).